Consider the following 454-residue polypeptide: tRNA modification GTPase MnmE (454 aa).

Residues Arg-23, Glu-80, and Lys-120 each contribute to the (6S)-5-formyl-5,6,7,8-tetrahydrofolate site. The 162-residue stretch at 216–377 (GMKVVIAGRP…LRDHLKQSMG (162 aa)) folds into the TrmE-type G domain. Asn-226 is a K(+) binding site. Residues 226 to 231 (NAGKSS), 245 to 251 (TDIAGTT), 270 to 273 (DTAG), 335 to 338 (NKAD), and 358 to 360 (SAR) contribute to the GTP site. Position 230 (Ser-230) interacts with Mg(2+). 3 residues coordinate K(+): Thr-245, Ile-247, and Thr-250. Thr-251 lines the Mg(2+) pocket. Lys-454 lines the (6S)-5-formyl-5,6,7,8-tetrahydrofolate pocket.

The protein belongs to the TRAFAC class TrmE-Era-EngA-EngB-Septin-like GTPase superfamily. TrmE GTPase family. As to quaternary structure, homodimer. Heterotetramer of two MnmE and two MnmG subunits. K(+) serves as cofactor.

It localises to the cytoplasm. Functionally, exhibits a very high intrinsic GTPase hydrolysis rate. Involved in the addition of a carboxymethylaminomethyl (cmnm) group at the wobble position (U34) of certain tRNAs, forming tRNA-cmnm(5)s(2)U34. This is tRNA modification GTPase MnmE from Yersinia pseudotuberculosis serotype O:3 (strain YPIII).